We begin with the raw amino-acid sequence, 248 residues long: 2,3-bisphosphoglycerate-dependent phosphoglycerate mutase (248 aa).

Substrate-binding positions include 8–15 (RHGESVWN), 21–22 (TG), R60, 87–90 (ERHY), K98, 114–115 (RR), and 183–184 (GN). Residue H9 is the Tele-phosphohistidine intermediate of the active site. Catalysis depends on E87, which acts as the Proton donor/acceptor.

Belongs to the phosphoglycerate mutase family. BPG-dependent PGAM subfamily.

The catalysed reaction is (2R)-2-phosphoglycerate = (2R)-3-phosphoglycerate. It functions in the pathway carbohydrate degradation; glycolysis; pyruvate from D-glyceraldehyde 3-phosphate: step 3/5. Its function is as follows. Catalyzes the interconversion of 2-phosphoglycerate and 3-phosphoglycerate. The chain is 2,3-bisphosphoglycerate-dependent phosphoglycerate mutase from Brachyspira hyodysenteriae (strain ATCC 49526 / WA1).